Reading from the N-terminus, the 530-residue chain is Bifunctional purine biosynthesis protein PurH (530 aa).

An MGS-like domain is found at 1–148 (MNNARPIRRA…KNHKDVTIVV (148 aa)).

Belongs to the PurH family.

It carries out the reaction (6R)-10-formyltetrahydrofolate + 5-amino-1-(5-phospho-beta-D-ribosyl)imidazole-4-carboxamide = 5-formamido-1-(5-phospho-D-ribosyl)imidazole-4-carboxamide + (6S)-5,6,7,8-tetrahydrofolate. It catalyses the reaction IMP + H2O = 5-formamido-1-(5-phospho-D-ribosyl)imidazole-4-carboxamide. The protein operates within purine metabolism; IMP biosynthesis via de novo pathway; 5-formamido-1-(5-phospho-D-ribosyl)imidazole-4-carboxamide from 5-amino-1-(5-phospho-D-ribosyl)imidazole-4-carboxamide (10-formyl THF route): step 1/1. It participates in purine metabolism; IMP biosynthesis via de novo pathway; IMP from 5-formamido-1-(5-phospho-D-ribosyl)imidazole-4-carboxamide: step 1/1. This Aliivibrio fischeri (strain MJ11) (Vibrio fischeri) protein is Bifunctional purine biosynthesis protein PurH.